A 366-amino-acid polypeptide reads, in one-letter code: Phenylalanine--tRNA ligase alpha subunit (366 aa).

Glu264 contributes to the Mg(2+) binding site.

This sequence belongs to the class-II aminoacyl-tRNA synthetase family. Phe-tRNA synthetase alpha subunit type 1 subfamily. As to quaternary structure, tetramer of two alpha and two beta subunits. The cofactor is Mg(2+).

It is found in the cytoplasm. It carries out the reaction tRNA(Phe) + L-phenylalanine + ATP = L-phenylalanyl-tRNA(Phe) + AMP + diphosphate + H(+). The sequence is that of Phenylalanine--tRNA ligase alpha subunit from Zymomonas mobilis subsp. mobilis (strain ATCC 31821 / ZM4 / CP4).